The following is an 871-amino-acid chain: Phosphoinositide 3-kinase regulatory subunit 5 (871 aa).

Met-1 carries the N-acetylmethionine modification. A heterodimerization region spans residues 25 to 101 (SLGRRSAPWS…TPHFPPDSDL (77 aa)). Residues 381–413 (MDSGYVEDSEENSEWPQKPGSQKRQGHRRPGQK) are disordered. Phosphoserine is present on residues Ser-451 and Ser-500. The tract at residues 646 to 746 (PILADMLLYY…WSNLEKVCTS (101 aa)) is interaction with beta-gamma G protein dimers.

As to quaternary structure, heterodimer of a catalytic subunit (PIK3CG/p120) and a regulatory (PIK3R5a/p101) subunit. Interacts with beta-gamma G protein dimers.

It is found in the nucleus. It localises to the cytoplasm. The protein localises to the cell membrane. With respect to regulation, greatly activated by G gamma proteins. Its function is as follows. Regulatory subunit of the PI3K gamma complex. Required for recruitment of the catalytic subunit to the plasma membrane via interaction with beta-gamma G protein dimers. Required for G protein-mediated activation of PIK3CG. This is Phosphoinositide 3-kinase regulatory subunit 5 (Pik3r5) from Mus musculus (Mouse).